The primary structure comprises 515 residues: Bifunctional purine biosynthesis protein PurH (515 aa).

The 145-residue stretch at M1–V145 folds into the MGS-like domain.

This sequence belongs to the PurH family.

The enzyme catalyses (6R)-10-formyltetrahydrofolate + 5-amino-1-(5-phospho-beta-D-ribosyl)imidazole-4-carboxamide = 5-formamido-1-(5-phospho-D-ribosyl)imidazole-4-carboxamide + (6S)-5,6,7,8-tetrahydrofolate. It carries out the reaction IMP + H2O = 5-formamido-1-(5-phospho-D-ribosyl)imidazole-4-carboxamide. The protein operates within purine metabolism; IMP biosynthesis via de novo pathway; 5-formamido-1-(5-phospho-D-ribosyl)imidazole-4-carboxamide from 5-amino-1-(5-phospho-D-ribosyl)imidazole-4-carboxamide (10-formyl THF route): step 1/1. It functions in the pathway purine metabolism; IMP biosynthesis via de novo pathway; IMP from 5-formamido-1-(5-phospho-D-ribosyl)imidazole-4-carboxamide: step 1/1. In Streptococcus equi subsp. zooepidemicus (strain H70), this protein is Bifunctional purine biosynthesis protein PurH.